The chain runs to 385 residues: Single-stranded DNA-binding protein 4 (385 aa).

The residue at position 1 (methionine 1) is an N-acetylmethionine. The LisH domain occupies alanine 17 to lysine 49. 2 disordered regions span residues phenylalanine 122–glutamate 287 and glycine 331–alanine 363. The span at serine 245 to glycine 263 shows a compositional bias: low complexity. The span at glycine 267–proline 277 shows a compositional bias: pro residues. Phosphoserine is present on serine 341. A Phosphothreonine modification is found at threonine 355.

It localises to the nucleus. This Homo sapiens (Human) protein is Single-stranded DNA-binding protein 4 (SSBP4).